The primary structure comprises 533 residues: Na(+)/H(+) antiporter NhaB (533 aa).

11 consecutive transmembrane segments (helical) span residues 10–30 (IGNFLGNSPKWYKIAILSFLI), 67–87 (PGGLLAIQAVAIGMTSASQVL), 96–116 (VLLLLVFMVAGIYFMKQLLLF), 131–165 (VSLMFCLASAFLSAFLDALTVIAVIITVAVGFYSI), 209–229 (LLMHAGVGTALGGVCTMVGEP), 247–267 (IRMSPVTVPVLFAGILTCFLV), 310–330 (AFVGVWLIAGLALHLASVGLI), 355–375 (EEALPFTALLAVFFAVVAVII), 396–416 (LVIFYIANGLLSMVSDNVFVG), 454–474 (ATPNGQAAFLFLLTSALAPLI), and 481–501 (MVWMALPYTIVLSIVGVMAIE).

This sequence belongs to the NhaB Na(+)/H(+) (TC 2.A.34) antiporter family.

It is found in the cell inner membrane. It carries out the reaction 2 Na(+)(in) + 3 H(+)(out) = 2 Na(+)(out) + 3 H(+)(in). Functionally, na(+)/H(+) antiporter that extrudes sodium in exchange for external protons. This is Na(+)/H(+) antiporter NhaB from Shewanella sp. (strain MR-4).